The chain runs to 507 residues: Probable cytosol aminopeptidase (507 aa).

Mn(2+) is bound by residues Lys-275 and Asp-280. Lys-287 is a catalytic residue. Mn(2+) is bound by residues Asp-298, Asp-357, and Glu-359. Arg-361 is an active-site residue.

This sequence belongs to the peptidase M17 family. Mn(2+) serves as cofactor.

Its subcellular location is the cytoplasm. The enzyme catalyses Release of an N-terminal amino acid, Xaa-|-Yaa-, in which Xaa is preferably Leu, but may be other amino acids including Pro although not Arg or Lys, and Yaa may be Pro. Amino acid amides and methyl esters are also readily hydrolyzed, but rates on arylamides are exceedingly low.. It carries out the reaction Release of an N-terminal amino acid, preferentially leucine, but not glutamic or aspartic acids.. In terms of biological role, presumably involved in the processing and regular turnover of intracellular proteins. Catalyzes the removal of unsubstituted N-terminal amino acids from various peptides. The sequence is that of Probable cytosol aminopeptidase from Acidobacterium capsulatum (strain ATCC 51196 / DSM 11244 / BCRC 80197 / JCM 7670 / NBRC 15755 / NCIMB 13165 / 161).